The chain runs to 260 residues: Adenosylcobinamide-GDP ribazoletransferase (260 aa).

The next 8 helical transmembrane spans lie at 3 to 23, 36 to 56, 60 to 80, 108 to 128, 133 to 153, 180 to 200, 206 to 226, and 239 to 259; these read APLW…LPAW, FAPW…LVLI, WPTS…SGGL, VGAS…ASLL, LAPL…LWAM, ALPA…LMIV, MVLM…PELL, and GASV…LLPA.

It belongs to the CobS family. The cofactor is Mg(2+).

Its subcellular location is the cell inner membrane. The catalysed reaction is alpha-ribazole + adenosylcob(III)inamide-GDP = adenosylcob(III)alamin + GMP + H(+). The enzyme catalyses alpha-ribazole 5'-phosphate + adenosylcob(III)inamide-GDP = adenosylcob(III)alamin 5'-phosphate + GMP + H(+). Its pathway is cofactor biosynthesis; adenosylcobalamin biosynthesis; adenosylcobalamin from cob(II)yrinate a,c-diamide: step 7/7. Functionally, joins adenosylcobinamide-GDP and alpha-ribazole to generate adenosylcobalamin (Ado-cobalamin). Also synthesizes adenosylcobalamin 5'-phosphate from adenosylcobinamide-GDP and alpha-ribazole 5'-phosphate. The chain is Adenosylcobinamide-GDP ribazoletransferase from Prochlorococcus marinus (strain MIT 9313).